The following is a 135-amino-acid chain: Mini-ribonuclease 3 (135 aa).

Residue aspartate 17 is part of the active site.

It belongs to the MrnC RNase family. In terms of assembly, homodimer. Mg(2+) serves as cofactor.

The protein resides in the cytoplasm. Involved in correct processing of both the 5' and 3' ends of 23S rRNA precursor. Processes 30S rRNA precursor transcript even in absence of ribonuclease 3 (Rnc); Rnc processes 30S rRNA into smaller rRNA precursors. The polypeptide is Mini-ribonuclease 3 (Bacillus cereus (strain ATCC 14579 / DSM 31 / CCUG 7414 / JCM 2152 / NBRC 15305 / NCIMB 9373 / NCTC 2599 / NRRL B-3711)).